Reading from the N-terminus, the 274-residue chain is Nitrogenase iron protein (274 aa).

Residue 8-15 (GKGGIGKS) participates in ATP binding. A [4Fe-4S] cluster-binding site is contributed by Cys-94. Arg-97 bears the ADP-ribosylarginine; by dinitrogenase reductase ADP-ribosyltransferase mark. Cys-131 contacts [4Fe-4S] cluster.

It belongs to the NifH/BchL/ChlL family. In terms of assembly, homodimer. Requires [4Fe-4S] cluster as cofactor. The reversible ADP-ribosylation of Arg-97 inactivates the nitrogenase reductase and regulates nitrogenase activity.

It catalyses the reaction N2 + 8 reduced [2Fe-2S]-[ferredoxin] + 16 ATP + 16 H2O = H2 + 8 oxidized [2Fe-2S]-[ferredoxin] + 2 NH4(+) + 16 ADP + 16 phosphate + 6 H(+). Functionally, the key enzymatic reactions in nitrogen fixation are catalyzed by the nitrogenase complex, which has 2 components: the iron protein and the molybdenum-iron protein. The chain is Nitrogenase iron protein from Azobacteroides pseudotrichonymphae genomovar. CFP2.